Reading from the N-terminus, the 491-residue chain is MKNQDQALIFEVSKEGRIGYSLPKLDVEEVKLEDVFESDYIRVEDAELPEVSELDIMRHYTALSNRNHGVDSGFYPLGSCTMKYNPKINESVARFAGFANIHPLQDEETVQGAMELMYDLQEHLIEITGMDTVTLQPAAGAHGEWTGLMLIRAYHEANGDFNRTKVIVPDSAHGTNPASATVAGFETITVKSNEHGLVDLEDLKRVVNEETAALMLTNPNTLGLFEENILEMAEIVHNAGGKLYYDGANLNAVLSQARPGDMGFDVVHLNLHKTFTGPHGGGGPGSGPVGVKADLIPYLPKPILEKTENGYHFNYDRPEAIGRVKPFYGNFGINVRAYTYIRSMGPDGLRAVTEYAVLNANYMMRRLAPFYDLPFDRHCKHEFVLSGRRQKKLGVRTLDIAKRLLDFGYHPPTIYFPLNVEECIMIEPTETESKETLDGFIDKMIQIAKEVEENPEVVQEAPHTTVIKRLDETMAARKPVLRYAKPAPVQV.

Lys-273 carries the N6-(pyridoxal phosphate)lysine modification.

It belongs to the GcvP family. C-terminal subunit subfamily. As to quaternary structure, the glycine cleavage system is composed of four proteins: P, T, L and H. In this organism, the P 'protein' is a heterodimer of two subunits. Requires pyridoxal 5'-phosphate as cofactor.

It catalyses the reaction N(6)-[(R)-lipoyl]-L-lysyl-[glycine-cleavage complex H protein] + glycine + H(+) = N(6)-[(R)-S(8)-aminomethyldihydrolipoyl]-L-lysyl-[glycine-cleavage complex H protein] + CO2. Functionally, the glycine cleavage system catalyzes the degradation of glycine. The P protein binds the alpha-amino group of glycine through its pyridoxal phosphate cofactor; CO(2) is released and the remaining methylamine moiety is then transferred to the lipoamide cofactor of the H protein. The protein is Probable glycine dehydrogenase (decarboxylating) subunit 2 of Bacillus thuringiensis (strain Al Hakam).